The following is a 327-amino-acid chain: Malate dehydrogenase (327 aa).

11–17 (GAAGQIG) provides a ligand contact to NAD(+). Arg92 and Arg98 together coordinate substrate. NAD(+) contacts are provided by residues Asn105, Gln112, and 129 to 131 (VGN). The substrate site is built by Asn131 and Arg162. The active-site Proton acceptor is the His187.

It belongs to the LDH/MDH superfamily. MDH type 2 family.

The enzyme catalyses (S)-malate + NAD(+) = oxaloacetate + NADH + H(+). Functionally, catalyzes the reversible oxidation of malate to oxaloacetate. This is Malate dehydrogenase from Leptospira biflexa serovar Patoc (strain Patoc 1 / Ames).